The sequence spans 467 residues: Cysteine--tRNA ligase (467 aa).

A Zn(2+)-binding site is contributed by C27. A 'HIGH' region motif is present at residues P29 to N39. Zn(2+) is bound by residues C207, H232, and E236. Positions K264–S268 match the 'KMSKS' region motif. Residue K267 participates in ATP binding.

This sequence belongs to the class-I aminoacyl-tRNA synthetase family. In terms of assembly, monomer. The cofactor is Zn(2+).

The protein resides in the cytoplasm. The enzyme catalyses tRNA(Cys) + L-cysteine + ATP = L-cysteinyl-tRNA(Cys) + AMP + diphosphate. The protein is Cysteine--tRNA ligase of Caldanaerobacter subterraneus subsp. tengcongensis (strain DSM 15242 / JCM 11007 / NBRC 100824 / MB4) (Thermoanaerobacter tengcongensis).